The sequence spans 310 residues: Olfactory receptor 5W2 (310 aa).

At 1 to 25 (MDWENCSSLTDFFLLGITNNPEMKV) the chain is on the extracellular side. N-linked (GlcNAc...) asparagine glycosylation occurs at Asn5. A helical membrane pass occupies residues 26-46 (TLFAVFLAVYIINFSANLGMI). Residues 47–54 (VLIRMDYQ) are Cytoplasmic-facing. The helical transmembrane segment at 55–75 (LHTPMYFFLSHLSFCDLCYST) threads the bilayer. The Extracellular segment spans residues 76–99 (ATGPKMLVDLLAKNKSIPFYGCAL). A helical transmembrane segment spans residues 100 to 120 (QFLVFCIFADSECLLLSVMAF). Over 121–139 (DRYKAIINPLLYTVNMSSR) the chain is Cytoplasmic. A helical transmembrane segment spans residues 140–160 (VCYLLLTGVYLVGIADALIHM). Topologically, residues 161 to 196 (TLAFRLCFCGSNEINHFFCDIPPLLLLSRSDTQVNE) are extracellular. A helical membrane pass occupies residues 197–217 (LVLFTVFGFIELSTISGVFIS). The Cytoplasmic segment spans residues 218 to 237 (YCYIILSVLEIHSAEGRFKA). A helical membrane pass occupies residues 238–258 (LSTCTSHLSAVAIFQGTLLFM). Residues 259-271 (YFRPSSSYSLDQD) lie on the Extracellular side of the membrane. The helical transmembrane segment at 272–292 (KMTSLFYTLVVPMLNPLIYSL) threads the bilayer. Topologically, residues 293–310 (RNKDVKEALKKLKNKILF) are cytoplasmic.

It belongs to the G-protein coupled receptor 1 family.

It localises to the cell membrane. Its function is as follows. Odorant receptor. This is Olfactory receptor 5W2 (OR5W2) from Homo sapiens (Human).